Reading from the N-terminus, the 392-residue chain is Probable tRNA sulfurtransferase (392 aa).

A THUMP domain is found at 59-167; sequence ADITDRVKKV…DQAFVFSNKI (109 aa). ATP-binding positions include 184 to 185, 209 to 210, Arg266, Gly288, and Gln297; these read LL and HF.

The protein belongs to the ThiI family.

It is found in the cytoplasm. It catalyses the reaction [ThiI sulfur-carrier protein]-S-sulfanyl-L-cysteine + a uridine in tRNA + 2 reduced [2Fe-2S]-[ferredoxin] + ATP + H(+) = [ThiI sulfur-carrier protein]-L-cysteine + a 4-thiouridine in tRNA + 2 oxidized [2Fe-2S]-[ferredoxin] + AMP + diphosphate. The catalysed reaction is [ThiS sulfur-carrier protein]-C-terminal Gly-Gly-AMP + S-sulfanyl-L-cysteinyl-[cysteine desulfurase] + AH2 = [ThiS sulfur-carrier protein]-C-terminal-Gly-aminoethanethioate + L-cysteinyl-[cysteine desulfurase] + A + AMP + 2 H(+). Its pathway is cofactor biosynthesis; thiamine diphosphate biosynthesis. Its function is as follows. Catalyzes the ATP-dependent transfer of a sulfur to tRNA to produce 4-thiouridine in position 8 of tRNAs, which functions as a near-UV photosensor. Also catalyzes the transfer of sulfur to the sulfur carrier protein ThiS, forming ThiS-thiocarboxylate. This is a step in the synthesis of thiazole, in the thiamine biosynthesis pathway. The sulfur is donated as persulfide by IscS. The protein is Probable tRNA sulfurtransferase of Alkaliphilus oremlandii (strain OhILAs) (Clostridium oremlandii (strain OhILAs)).